Consider the following 379-residue polypeptide: Lipoyl synthase, mitochondrial (379 aa).

[4Fe-4S] cluster-binding residues include C94, C99, C105, C126, C130, C133, and S342. In terms of domain architecture, Radical SAM core spans 109-331 (GEDNGAATAT…EKEAMSMGFL (223 aa)).

Belongs to the radical SAM superfamily. Lipoyl synthase family. [4Fe-4S] cluster serves as cofactor.

Its subcellular location is the mitochondrion. The enzyme catalyses [[Fe-S] cluster scaffold protein carrying a second [4Fe-4S](2+) cluster] + N(6)-octanoyl-L-lysyl-[protein] + 2 oxidized [2Fe-2S]-[ferredoxin] + 2 S-adenosyl-L-methionine + 4 H(+) = [[Fe-S] cluster scaffold protein] + N(6)-[(R)-dihydrolipoyl]-L-lysyl-[protein] + 4 Fe(3+) + 2 hydrogen sulfide + 2 5'-deoxyadenosine + 2 L-methionine + 2 reduced [2Fe-2S]-[ferredoxin]. It participates in protein modification; protein lipoylation via endogenous pathway; protein N(6)-(lipoyl)lysine from octanoyl-[acyl-carrier-protein]: step 2/2. In terms of biological role, catalyzes the radical-mediated insertion of two sulfur atoms into the C-6 and C-8 positions of the octanoyl moiety bound to the lipoyl domains of lipoate-dependent enzymes, thereby converting the octanoylated domains into lipoylated derivatives. This chain is Lipoyl synthase, mitochondrial, found in Leishmania braziliensis.